Consider the following 415-residue polypeptide: Citrate (Re)-synthase (415 aa).

One can recognise a Pyruvate carboxyltransferase domain in the interval 4–275 (IFIIDVTNRD…GHEVDLSKAW (272 aa)).

It belongs to the alpha-IPM synthase/homocitrate synthase family. The cofactor is Mn(2+).

It catalyses the reaction oxaloacetate + acetyl-CoA + H2O = citrate + CoA + H(+). Inhibited by citrate and under aerobic conditions. Its function is as follows. Catalyzes the condensation of the acetyl group of acetyl coenzyme A (acetyl-CoA) with oxaloacetate to form citrate. This enzyme is highly Re-face stereospecific with respect to the C-2 of oxaloacetate. This Dehalococcoides mccartyi (strain CBDB1) protein is Citrate (Re)-synthase.